We begin with the raw amino-acid sequence, 126 residues long: Fluoride-specific ion channel FluC 1 (126 aa).

4 helical membrane passes run 1–21, 38–58, 67–87, and 99–119; these read MAGSALEALLVGIGAIPGAWL, WGTFAVNVIACFGLGLVLALY, LALLIGVGFFGSLSTFSTFAV, and FVSLVLALASIAAGLCAAGVG. Residues Gly-77 and Ser-80 each coordinate Na(+).

Belongs to the fluoride channel Fluc/FEX (TC 1.A.43) family.

It is found in the cell inner membrane. It catalyses the reaction fluoride(in) = fluoride(out). Its activity is regulated as follows. Na(+) is not transported, but it plays an essential structural role and its presence is essential for fluoride channel function. In terms of biological role, fluoride-specific ion channel. Important for reducing fluoride concentration in the cell, thus reducing its toxicity. The chain is Fluoride-specific ion channel FluC 1 from Synechococcus sp. (strain CC9902).